A 238-amino-acid chain; its full sequence is Uridylate kinase (238 aa).

Residue 12-15 participates in ATP binding; sequence KLSG. Residues 20–25 are involved in allosteric activation by GTP; it reads GEKGFG. Gly-54 serves as a coordination point for UMP. ATP is bound by residues Gly-55 and Arg-59. UMP contacts are provided by residues Asp-74 and 135-142; that span reads TGSPYFST. Asn-163, Tyr-169, and Asp-172 together coordinate ATP.

Belongs to the UMP kinase family. In terms of assembly, homohexamer.

It is found in the cytoplasm. It catalyses the reaction UMP + ATP = UDP + ADP. Its pathway is pyrimidine metabolism; CTP biosynthesis via de novo pathway; UDP from UMP (UMPK route): step 1/1. With respect to regulation, allosterically activated by GTP. Inhibited by UTP. In terms of biological role, catalyzes the reversible phosphorylation of UMP to UDP. The sequence is that of Uridylate kinase from Lactococcus lactis subsp. lactis (strain IL1403) (Streptococcus lactis).